Reading from the N-terminus, the 456-residue chain is Bifunctional protein GlmU (456 aa).

The interval 1–229 (MTKKALSAVI…VMEVEGANNR (229 aa)) is pyrophosphorylase. Residues 11-14 (LAAG), K25, Q76, 81-82 (GT), 103-105 (YGD), G140, E154, N169, and N227 contribute to the UDP-N-acetyl-alpha-D-glucosamine site. D105 contributes to the Mg(2+) binding site. Residue N227 participates in Mg(2+) binding. Positions 230–250 (LQLAALERYLQNKQASKLLLE) are linker. The tract at residues 251-456 (GVMIYDPARF…QGWQRPIKKK (206 aa)) is N-acetyltransferase. 2 residues coordinate UDP-N-acetyl-alpha-D-glucosamine: R333 and K351. The Proton acceptor role is filled by H363. UDP-N-acetyl-alpha-D-glucosamine-binding residues include Y366 and N377. Acetyl-CoA-binding positions include A380, 386–387 (NY), S405, A423, and R440.

It in the N-terminal section; belongs to the N-acetylglucosamine-1-phosphate uridyltransferase family. This sequence in the C-terminal section; belongs to the transferase hexapeptide repeat family. Homotrimer. It depends on Mg(2+) as a cofactor.

It is found in the cytoplasm. The enzyme catalyses alpha-D-glucosamine 1-phosphate + acetyl-CoA = N-acetyl-alpha-D-glucosamine 1-phosphate + CoA + H(+). The catalysed reaction is N-acetyl-alpha-D-glucosamine 1-phosphate + UTP + H(+) = UDP-N-acetyl-alpha-D-glucosamine + diphosphate. Its pathway is nucleotide-sugar biosynthesis; UDP-N-acetyl-alpha-D-glucosamine biosynthesis; N-acetyl-alpha-D-glucosamine 1-phosphate from alpha-D-glucosamine 6-phosphate (route II): step 2/2. It functions in the pathway nucleotide-sugar biosynthesis; UDP-N-acetyl-alpha-D-glucosamine biosynthesis; UDP-N-acetyl-alpha-D-glucosamine from N-acetyl-alpha-D-glucosamine 1-phosphate: step 1/1. It participates in bacterial outer membrane biogenesis; LPS lipid A biosynthesis. Functionally, catalyzes the last two sequential reactions in the de novo biosynthetic pathway for UDP-N-acetylglucosamine (UDP-GlcNAc). The C-terminal domain catalyzes the transfer of acetyl group from acetyl coenzyme A to glucosamine-1-phosphate (GlcN-1-P) to produce N-acetylglucosamine-1-phosphate (GlcNAc-1-P), which is converted into UDP-GlcNAc by the transfer of uridine 5-monophosphate (from uridine 5-triphosphate), a reaction catalyzed by the N-terminal domain. This Haemophilus influenzae (strain PittGG) protein is Bifunctional protein GlmU.